Consider the following 500-residue polypeptide: Cytochrome P450 2D20 (500 aa).

Position 446 (C446) interacts with heme.

The protein belongs to the cytochrome P450 family. Requires heme as cofactor.

It localises to the endoplasmic reticulum membrane. Its subcellular location is the microsome membrane. The polypeptide is Cytochrome P450 2D20 (CYP2D20) (Mesocricetus auratus (Golden hamster)).